Consider the following 381-residue polypeptide: uncharacterized protein (381 aa).

Residues 331 to 340 (MQNGYANNGR) are compositionally biased toward polar residues. The disordered stretch occupies residues 331–381 (MQNGYANNGRNHQRERFERPEKNSKKNKFLPFNGSNKEKKRDKLKKNCVIM). The span at 342-354 (HQRERFERPEKNS) shows a compositional bias: basic and acidic residues. The span at 372 to 381 (DKLKKNCVIM) shows a compositional bias: basic residues.

It localises to the cytoplasm. The protein localises to the nucleus. This is an uncharacterized protein from Saccharomyces cerevisiae (strain ATCC 204508 / S288c) (Baker's yeast).